We begin with the raw amino-acid sequence, 7839 residues long: Nonribosomal peptide synthetase GRA1 (7839 aa).

Residues 1–23 show a composition bias toward polar residues; sequence MALLNGKSTLPNGHNSSIESPNG. The segment at 1 to 26 is disordered; it reads MALLNGKSTLPNGHNSSIESPNGYTE. An adenylation 1 region spans residues 264–650; sequence LASPNSCAVH…LGRIDDQVKI (387 aa). In terms of domain architecture, Carrier 1 spans 793–866; sequence SAEALVLRQL…LQAEMSEKKK (74 aa). O-(pantetheine 4'-phosphoryl)serine is present on Ser-827. A condensation 1 region spans residues 916 to 1332; it reads DIYPASPLQE…ILSPSDVAQI (417 aa). Residues 1351-1742 form an adenylation 2 region; sequence FFTQVKRSPD…QRKDAQLKIR (392 aa). The region spanning 1880–1957 is the Carrier 2 domain; sequence ELETEAERTM…AMSRQATVSD (78 aa). Ser-1918 is modified (O-(pantetheine 4'-phosphoryl)serine). The interval 1997 to 2413 is condensation 2; it reads DLYPCTPFQE…LISPSDMETI (417 aa). Residues 2432-2828 are adenylation 3; sequence FDRRLSQKHS…GRRDTQLKIR (397 aa). Residues 2963-3040 form the Carrier 3 domain; it reads IPTTQMEWNL…DLAQAIVLDT (78 aa). An O-(pantetheine 4'-phosphoryl)serine modification is found at Ser-3001. The tract at residues 3084 to 3496 is condensation 3; it reads DIYPCTPLQD…QVDLISDSDH (413 aa). The interval 3520–3923 is adenylation 4; the sequence is RLAVSNPDAE…GRRDSQVKLR (404 aa). One can recognise a Carrier 4 domain in the interval 4057–4134; that stretch reads RPLTEREKDL…DMAAMTTSLS (78 aa). Ser-4095 bears the O-(pantetheine 4'-phosphoryl)serine mark. A condensation 4 region spans residues 4234 to 4569; sequence NLEEFVGRQS…MMNPDDAEEI (336 aa). The tract at residues 4591–4982 is adenylation 5; sequence HSKGCPDRIA…VSRKDTQVKF (392 aa). The Carrier 5 domain occupies 5113–5189; it reads ALSSDEESQL…DMALCMTSAQ (77 aa). O-(pantetheine 4'-phosphoryl)serine is present on Ser-5150. The condensation 5 stretch occupies residues 5224 to 5653; the sequence is EDIYPCSALQ…VSPSDQAEIL (430 aa). The adenylation 6 stretch occupies residues 5671–6069; sequence FESRARLQPS…GRRDTQVKLR (399 aa). In terms of domain architecture, Carrier 6 spans 6207–6282; sequence FPSSLAEQQM…HMAAIATTFT (76 aa). O-(pantetheine 4'-phosphoryl)serine is present on Ser-6243. Residues 6321–6730 form a condensation 6 region; sequence QDIYPCSALQ…RLADMDLTGP (410 aa). Positions 6756 to 7147 are adenylation 7; it reads EQRVKSQPDS…LGRKDSQIKL (392 aa). Residues 7290–7366 enclose the Carrier 7 domain; that stretch reads KAATPNEKTL…DLARVSRQSI (77 aa). The residue at position 7327 (Ser-7327) is an O-(pantetheine 4'-phosphoryl)serine. The segment at 7404–7704 is condensation7; the sequence is HDIYPCTQVQ…LDYAKKRASS (301 aa).

Belongs to the NRP synthetase family.

It participates in mycotoxin biosynthesis. Functionally, nonribosomal peptide synthetase; part of the gene cluster that mediates the biosynthesis of gramillins A and B, bicyclic lipopeptides that induce cell death in maize leaves but not in wheat leaves. The nonribosomal peptide synthetase GRA1 incorporates respectively a glutamic adic (Glu), a leucine (Leu), a serine (Ser), a hydroxyglutamine (HOGln), a 2-amino decanoic acid, and 2 cysteins (CysB and CysA). The biosynthesis of 2-amino decanoic acid incorporated in gramillins could be initiated by a fatty acid synthase composed of the alpha and beta subunits FGSG_00036 and FGSG_11656. The cytochrome P450 monooxygenase FGSG_15680 could hydroxylate the fatty acid chain. Subsequent oxidation to the ketone by the oxidoreductase FGSG_00048 and transamination by aminotransferase FGSG_00049 could form 2-amino-decanoic acid. On the other hand, FGSG_15680 could also be responsible for the HO-modified glutamine at the gamma-position. Whether hydroxylation occurs on the fully assembled product or on the Gln residue prior to assembly into the gramillins requires further proof. The thioredoxin FGSG_00043 could also be required for the disulfide-bond formation between CysA and CysB. The specific involvement of the remaining proteins from the cluster is more difficult to discern, but could have broader regulatory (FGSG_00040 and FGSG_11657) or enzymatic functions (FGSG_00044 and FGSG_00045). The final C-domain of GRA1 does not possess the expected sequence of a termination CT domain, often implicated in macrocyclization and release of a cyclopeptidein fungal NRPs; and the thioesterase FGSG_00047 may act in concert with the terminal C-domain of GRA1 to catalyze the formation of the macrocyclic anhydride and release of the products. In Gibberella zeae (strain ATCC MYA-4620 / CBS 123657 / FGSC 9075 / NRRL 31084 / PH-1) (Wheat head blight fungus), this protein is Nonribosomal peptide synthetase GRA1.